A 282-amino-acid polypeptide reads, in one-letter code: Cyanocobalamin reductase / alkylcobalamin dealkylase (282 aa).

Substrate contacts are provided by residues aspartate 104, 115-118 (ILAQ), 129-131 (YYQ), cysteine 149, and isoleucine 160. Residues 234 to 282 (LGLAQPSEKPSSPSPDLPFTTPAPKKPGNPSRARSWLSPRVSPPASPGP) form a disordered region. Serine 245, serine 247, serine 275, and serine 279 each carry phosphoserine.

The protein belongs to the MMACHC family. In terms of assembly, monomer in the absence of bound substrate. Homodimer; dimerization is triggered by binding to FMN or adenosylcobalamin. Interacts with LMBRD1 and ABCD4; the interaction ensures the transport of cobalamin from the lysosome to the cytoplasm. Forms a multiprotein complex with MMADHC, MTR and MTRR; the interaction with MTR could modulate MMACHC-dependent processing of cobalamin. Heterodimer with MMADHC; the interaction might play a role in the regulation of the balance between AdoCbl and MeCbl synthesis. It depends on FAD as a cofactor. FMN serves as cofactor. Widely expressed. Expressed at higher level in fetal liver. Also expressed in spleen, lymph node, thymus and bone marrow. Weakly or not expressed in peripheral blood leukocytes.

It is found in the cytoplasm. Its subcellular location is the cytosol. The catalysed reaction is 2 cob(II)alamin-[cyanocobalamin reductase] + 2 hydrogen cyanide + NADP(+) = 2 cyanocob(III)alamin + 2 apo-[cyanocobalamin reductase] + NADPH + H(+). The enzyme catalyses apo-[alkylcobalamin reductase] + an R-cob(III)alamin + glutathione = cob(I)alamin-[alkylcobalamin reductase] + an S-substituted glutathione + H(+). It catalyses the reaction apo-[alkylcobalamin reductase] + methylcob(III)alamin + glutathione = S-methyl glutathione + cob(I)alamin-[alkylcobalamin reductase] + H(+). It carries out the reaction apo-[alkylcobalamin reductase] + adenosylcob(III)alamin + glutathione = S-adenosylglutathione + cob(I)alamin-[alkylcobalamin reductase] + H(+). Cobalamin (vitamin B12) cytosolic chaperone that catalyzes the reductive decyanation of cyanocob(III)alamin (cyanocobalamin, CNCbl) to yield cob(II)alamin and cyanide, using FAD or FMN as cofactors and NADPH as cosubstrate. Cyanocobalamin constitutes the inactive form of vitamin B12 introduced from the diet, and is converted into the active cofactors methylcobalamin (MeCbl) involved in methionine biosynthesis, and 5'-deoxyadenosylcobalamin (AdoCbl) involved in the TCA cycle. Forms a complex with the lysosomal transporter ABCD4 and its chaperone LMBRD1, to transport cobalamin across the lysosomal membrane into the cytosol. The processing of cobalamin in the cytosol occurs in a multiprotein complex composed of at least MMACHC, MMADHC, MTRR (methionine synthase reductase) and MTR (methionine synthase) which may contribute to shuttle safely and efficiently cobalamin towards MTR in order to produce methionine. Also acts as a glutathione transferase by catalyzing the dealkylation of the alkylcob(III)alamins MeCbl and AdoCbl, using the thiolate of glutathione for nucleophilic displacement to generate cob(I)alamin and the corresponding glutathione thioether. The conversion of incoming MeCbl or AdoCbl into a common intermediate cob(I)alamin is necessary to meet the cellular needs for both cofactors. Cysteine and homocysteine cannot substitute for glutathione in this reaction. This Homo sapiens (Human) protein is Cyanocobalamin reductase / alkylcobalamin dealkylase.